The chain runs to 30 residues: 2S seed storage-like protein (30 aa).

This sequence belongs to the 2S seed storage albumins family. The mature protein is a heterodimer of a small and a large chain linked by 2 disulfide bonds. Extracted from castor bean.

Functionally, this is a 2S seed storage protein. Inhibits spore germination in R.solani and F.oxysporum. Exhibits anti-trypsin activity. The sequence is that of 2S seed storage-like protein from Ricinus communis (Castor bean).